The primary structure comprises 102 residues: Small ribosomal subunit protein uS10 (102 aa).

This sequence belongs to the universal ribosomal protein uS10 family. In terms of assembly, part of the 30S ribosomal subunit.

Its function is as follows. Involved in the binding of tRNA to the ribosomes. The sequence is that of Small ribosomal subunit protein uS10 from Mesoplasma florum (strain ATCC 33453 / NBRC 100688 / NCTC 11704 / L1) (Acholeplasma florum).